A 298-amino-acid polypeptide reads, in one-letter code: Estradiol 17-beta-dehydrogenase 11 (298 aa).

A signal peptide spans 1-21 (MKYLLDLILLLPLLIVFCIES). An NADP(+)-binding site is contributed by 40 to 64 (LITGAGHGIGRLTAYEFAKLNTKLV). Ser172 contributes to the substrate binding site. Tyr185 serves as the catalytic Proton acceptor.

The protein belongs to the short-chain dehydrogenases/reductases (SDR) family. 17-beta-HSD 3 subfamily.

The protein resides in the endoplasmic reticulum. The protein localises to the lipid droplet. The catalysed reaction is 17beta-estradiol + NAD(+) = estrone + NADH + H(+). The enzyme catalyses 17beta-estradiol + NADP(+) = estrone + NADPH + H(+). In terms of biological role, can convert androstan-3-alpha,17-beta-diol (3-alpha-diol) to androsterone in vitro, suggesting that it may participate in androgen metabolism during steroidogenesis. May act by metabolizing compounds that stimulate steroid synthesis and/or by generating metabolites that inhibit it. Has no activity toward DHEA (dehydroepiandrosterone), or A-dione (4-androste-3,17-dione), and only a slight activity toward testosterone to A-dione. The sequence is that of Estradiol 17-beta-dehydrogenase 11 (Hsd17b11) from Rattus norvegicus (Rat).